The sequence spans 192 residues: Leucine-rich repeat-containing protein 51 (192 aa).

LRR repeat units lie at residues 50–71, 80–101, and 103–124; these read MTQS…NHAV, NLAW…LTTF, and NLSV…NKLA. An LRRCT domain is found at 137 to 175; the sequence is NPIEEEKGYRQYVLCTLPHITTFDFSGVTKADRTTAEVW.

The protein localises to the cytoplasm. This is Leucine-rich repeat-containing protein 51 from Bos taurus (Bovine).